Reading from the N-terminus, the 143-residue chain is Transcriptional regulator MraZ (143 aa).

SpoVT-AbrB domains follow at residues 5–47 (SHAP…PMAE) and 76–119 (AADD…DAQR).

Belongs to the MraZ family. As to quaternary structure, forms oligomers.

It is found in the cytoplasm. It localises to the nucleoid. The protein is Transcriptional regulator MraZ of Frankia casuarinae (strain DSM 45818 / CECT 9043 / HFP020203 / CcI3).